Reading from the N-terminus, the 781-residue chain is Cytosolic phospholipase A2 beta (781 aa).

Residues 1 to 112 form the C2 domain; that stretch reads MAVAEVSRTC…RAGEFRRESF (112 aa). 5 residues coordinate Ca(2+): aspartate 26, aspartate 32, aspartate 82, aspartate 84, and aspartate 90. The PLA2c domain occupies 246 to 781; sequence EAGLRELAVR…VQRRRQRRPH (536 aa). Serine 335 (nucleophile) is an active-site residue. The Proton acceptor role is filled by aspartate 615.

It depends on Ca(2+) as a cofactor. In terms of tissue distribution, widely expressed. Expressed at higher level in brain, heart, liver, cerebellum and pancreas.

It is found in the cytoplasm. Its subcellular location is the cytosol. The protein resides in the mitochondrion membrane. It localises to the early endosome membrane. The catalysed reaction is a 1,2-diacyl-sn-glycero-3-phosphocholine + H2O = a 1-acyl-sn-glycero-3-phosphocholine + a fatty acid + H(+). The enzyme catalyses a 1-acyl-sn-glycero-3-phosphocholine + H2O = sn-glycerol 3-phosphocholine + a fatty acid + H(+). It catalyses the reaction 1-hexadecanoyl-2-(9Z,12Z-octadecadienoyl)-sn-glycero-3-phosphoethanolamine + H2O = 1-hexadecanoyl-sn-glycero-3-phosphoethanolamine + (9Z,12Z)-octadecadienoate + H(+). It carries out the reaction 1-hexadecanoyl-2-(5Z,8Z,11Z,14Z-eicosatetraenoyl)-sn-glycero-3-phosphoethanolamine + H2O = 1-hexadecanoyl-sn-glycero-3-phosphoethanolamine + (5Z,8Z,11Z,14Z)-eicosatetraenoate + H(+). The catalysed reaction is 1-hexadecanoyl-sn-glycero-3-phosphocholine + H2O = sn-glycerol 3-phosphocholine + hexadecanoate + H(+). The enzyme catalyses 1-hexadecanoyl-2-(5Z,8Z,11Z,14Z-eicosatetraenoyl)-sn-glycero-3-phosphocholine + H2O = 1-hexadecanoyl-sn-glycero-3-phosphocholine + (5Z,8Z,11Z,14Z)-eicosatetraenoate + H(+). It catalyses the reaction 1-hexadecanoyl-2-(5Z,8Z,11Z,14Z-eicosatetraenoyl)-sn-glycero-3-phosphocholine + H2O = 2-(5Z,8Z,11Z,14Z)-eicosatetraenoyl-sn-glycero-3-phosphocholine + hexadecanoate + H(+). Stimulated by cytosolic Ca(2+). Calcium-dependent phospholipase A1 and A2 and lysophospholipase that may play a role in membrane phospholipid remodeling. Functionally, calcium-dependent phospholipase A2 and lysophospholipase. Cleaves the ester bond of the fatty acyl group attached to the sn-2 position of phosphatidylethanolamines, producing lysophospholipids that may be used in deacylation-reacylation cycles. Hydrolyzes lysophosphatidylcholines with low efficiency but is inefficient toward phosphatidylcholines. Its function is as follows. Calcium-dependent phospholipase A1 and A2 and lysophospholipase. Cleaves the ester bond of the fatty acyl group attached to the sn-1 or sn-2 position of diacyl phospholipids (phospholipase A1 and A2 activity, respectively), producing lysophospholipids that may be used in deacylation-reacylation cycles. Can further hydrolyze lysophospholipids enabling complete deacylation. Has no activity toward alkylacyl phospholipids. In Homo sapiens (Human), this protein is Cytosolic phospholipase A2 beta (PLA2G4B).